The following is a 286-amino-acid chain: NAD kinase (286 aa).

The active-site Proton acceptor is aspartate 68. NAD(+) contacts are provided by residues 68–69 (DG), lysine 73, 142–143 (ND), arginine 153, aspartate 172, 183–188 (TGYSFS), and glutamine 242.

Belongs to the NAD kinase family. Requires a divalent metal cation as cofactor.

It localises to the cytoplasm. It catalyses the reaction NAD(+) + ATP = ADP + NADP(+) + H(+). Its function is as follows. Involved in the regulation of the intracellular balance of NAD and NADP, and is a key enzyme in the biosynthesis of NADP. Catalyzes specifically the phosphorylation on 2'-hydroxyl of the adenosine moiety of NAD to yield NADP. The chain is NAD kinase from Natranaerobius thermophilus (strain ATCC BAA-1301 / DSM 18059 / JW/NM-WN-LF).